A 246-amino-acid chain; its full sequence is MGTDGLDDKQARPPRRARRSLRWVLAAPLLFAAASVLQVLALRIIDPPISTVMVGRYLEAWGEGEAGFSLHHQWRDLDEIAPSLPISVVAAEDQQFPSHHGFDLQAIEKARDYNARGGRVRGASTISQQVAKNVFLWQGRSWVRKGLEAWYTLLIELFWPKQRILEMYVNVAEFGDGIYGAQAAARQFWGKDASRLTPTESARLAAVLPSPRRYDARRPGAYVQRRTAWIQRQARQLGGPGYLQAP.

Residues 20 to 42 form a helical membrane-spanning segment; sequence SLRWVLAAPLLFAAASVLQVLAL.

This sequence belongs to the glycosyltransferase 51 family.

Its subcellular location is the cell inner membrane. It carries out the reaction [GlcNAc-(1-&gt;4)-Mur2Ac(oyl-L-Ala-gamma-D-Glu-L-Lys-D-Ala-D-Ala)](n)-di-trans,octa-cis-undecaprenyl diphosphate + beta-D-GlcNAc-(1-&gt;4)-Mur2Ac(oyl-L-Ala-gamma-D-Glu-L-Lys-D-Ala-D-Ala)-di-trans,octa-cis-undecaprenyl diphosphate = [GlcNAc-(1-&gt;4)-Mur2Ac(oyl-L-Ala-gamma-D-Glu-L-Lys-D-Ala-D-Ala)](n+1)-di-trans,octa-cis-undecaprenyl diphosphate + di-trans,octa-cis-undecaprenyl diphosphate + H(+). The protein operates within cell wall biogenesis; peptidoglycan biosynthesis. In terms of biological role, peptidoglycan polymerase that catalyzes glycan chain elongation from lipid-linked precursors. The sequence is that of Biosynthetic peptidoglycan transglycosylase from Xanthomonas campestris pv. campestris (strain 8004).